The following is a 609-amino-acid chain: Tyrosyl-DNA phosphodiesterase 1 (609 aa).

A compositionally biased stretch (polar residues) spans 1-12 (MSQESSYGKWTI). The tract at residues 1 to 154 (MSQESSYGKW…EYETSGEGQD (154 aa)) is disordered. Serine 61, serine 119, and serine 132 each carry phosphoserine. Residues 127 to 143 (KVEDRSPPDSHRAQRAD) show a composition bias toward basic and acidic residues. At threonine 148 the chain carries Phosphothreonine. At serine 149 the chain carries Phosphoserine. The active-site Nucleophile is histidine 264. Residue lysine 266 coordinates substrate. The interaction with DNA stretch occupies residues 401–404 (SIGS). Histidine 494 serves as the catalytic Proton donor/acceptor. Lysine 496 is a binding site for substrate.

It belongs to the tyrosyl-DNA phosphodiesterase family. In terms of assembly, monomer.

Its subcellular location is the nucleus. It is found in the cytoplasm. DNA repair enzyme that can remove a variety of covalent adducts from DNA through hydrolysis of a 3'-phosphodiester bond, giving rise to DNA with a free 3' phosphate. Catalyzes the hydrolysis of dead-end complexes between DNA and the topoisomerase I active site tyrosine residue. Hydrolyzes 3'-phosphoglycolates on protruding 3' ends on DNA double-strand breaks due to DNA damage by radiation and free radicals. Acts on blunt-ended double-strand DNA breaks and on single-stranded DNA. Has low 3'exonuclease activity and can remove a single nucleoside from the 3'end of DNA and RNA molecules with 3'hydroxyl groups. Has no exonuclease activity towards DNA or RNA with a 3'phosphate. In Rattus norvegicus (Rat), this protein is Tyrosyl-DNA phosphodiesterase 1 (Tdp1).